We begin with the raw amino-acid sequence, 396 residues long: S-adenosylmethionine synthase (396 aa).

An ATP-binding site is contributed by His16. Asp18 is a Mg(2+) binding site. Glu44 contacts K(+). L-methionine contacts are provided by Glu57 and Gln100. Residues 100 to 110 (QSPDIAQGVDR) form a flexible loop region. ATP contacts are provided by residues 167–169 (DAK), 233–234 (RF), Asp242, 248–249 (RK), Ala265, and Lys269. Asp242 is a binding site for L-methionine. An L-methionine-binding site is contributed by Lys273.

This sequence belongs to the AdoMet synthase family. As to quaternary structure, homotetramer; dimer of dimers. Requires Mg(2+) as cofactor. It depends on K(+) as a cofactor.

The protein localises to the cytoplasm. It carries out the reaction L-methionine + ATP + H2O = S-adenosyl-L-methionine + phosphate + diphosphate. It participates in amino-acid biosynthesis; S-adenosyl-L-methionine biosynthesis; S-adenosyl-L-methionine from L-methionine: step 1/1. Functionally, catalyzes the formation of S-adenosylmethionine (AdoMet) from methionine and ATP. The overall synthetic reaction is composed of two sequential steps, AdoMet formation and the subsequent tripolyphosphate hydrolysis which occurs prior to release of AdoMet from the enzyme. The chain is S-adenosylmethionine synthase from Paraburkholderia xenovorans (strain LB400).